Reading from the N-terminus, the 551-residue chain is Arginine--tRNA ligase (551 aa).

The 'HIGH' region signature appears at 123-133 (ANPTGPLTIGR).

It belongs to the class-I aminoacyl-tRNA synthetase family. Monomer.

It is found in the cytoplasm. The catalysed reaction is tRNA(Arg) + L-arginine + ATP = L-arginyl-tRNA(Arg) + AMP + diphosphate. This is Arginine--tRNA ligase from Prosthecochloris aestuarii (strain DSM 271 / SK 413).